Consider the following 384-residue polypeptide: Glucose-fructose oxidoreductase domain-containing protein 2 (384 aa).

A signal peptide spans M1 to A25. The tract at residues G358–L384 is disordered. The segment covering S372 to L384 has biased composition (polar residues).

The protein belongs to the Gfo/Idh/MocA family.

Its subcellular location is the secreted. The protein resides in the extracellular space. The protein localises to the extracellular matrix. Functionally, promotes matrix assembly. This chain is Glucose-fructose oxidoreductase domain-containing protein 2 (gfod2), found in Xenopus laevis (African clawed frog).